Consider the following 335-residue polypeptide: Phosphatidate cytidylyltransferase, mitochondrial (335 aa).

Belongs to the TAM41 family. Requires Mg(2+) as cofactor.

Its subcellular location is the mitochondrion inner membrane. It carries out the reaction a 1,2-diacyl-sn-glycero-3-phosphate + CTP + H(+) = a CDP-1,2-diacyl-sn-glycerol + diphosphate. Its pathway is phospholipid metabolism; CDP-diacylglycerol biosynthesis; CDP-diacylglycerol from sn-glycerol 3-phosphate: step 3/3. In terms of biological role, catalyzes the conversion of phosphatidic acid (PA) to CDP-diacylglycerol (CDP-DAG), an essential intermediate in the synthesis of phosphatidylglycerol, cardiolipin and phosphatidylinositol. The polypeptide is Phosphatidate cytidylyltransferase, mitochondrial (TAMM41) (Bos taurus (Bovine)).